The following is a 197-amino-acid chain: Recombination protein RecR (197 aa).

Residues 56–71 (CVRCFSLTDAETCNFC) form a C4-type zinc finger. Residues 79-174 (RVLCVVETFA…RVTRIAQGLP (96 aa)) enclose the Toprim domain.

Belongs to the RecR family.

Functionally, may play a role in DNA repair. It seems to be involved in an RecBC-independent recombinational process of DNA repair. It may act with RecF and RecO. The sequence is that of Recombination protein RecR from Myxococcus xanthus (strain DK1622).